A 139-amino-acid polypeptide reads, in one-letter code: Putative pre-16S rRNA nuclease (139 aa).

Belongs to the YqgF nuclease family.

The protein resides in the cytoplasm. Functionally, could be a nuclease involved in processing of the 5'-end of pre-16S rRNA. This Streptococcus sanguinis (strain SK36) protein is Putative pre-16S rRNA nuclease.